Consider the following 150-residue polypeptide: Urease subunit beta (150 aa).

Residues 122–140 show a composition bias toward low complexity; sequence GAVVGDSPAATPGTTGATG. The interval 122 to 150 is disordered; it reads GAVVGDSPAATPGTTGATGDLPGYLGEGS.

This sequence belongs to the urease beta subunit family. As to quaternary structure, heterotrimer of UreA (gamma), UreB (beta) and UreC (alpha) subunits. Three heterotrimers associate to form the active enzyme.

It localises to the cytoplasm. The catalysed reaction is urea + 2 H2O + H(+) = hydrogencarbonate + 2 NH4(+). It participates in nitrogen metabolism; urea degradation; CO(2) and NH(3) from urea (urease route): step 1/1. The polypeptide is Urease subunit beta (Frankia alni (strain DSM 45986 / CECT 9034 / ACN14a)).